We begin with the raw amino-acid sequence, 502 residues long: Probable glycine dehydrogenase (decarboxylating) subunit 2 (502 aa).

Position 273 is an N6-(pyridoxal phosphate)lysine (Lys-273).

This sequence belongs to the GcvP family. C-terminal subunit subfamily. The glycine cleavage system is composed of four proteins: P, T, L and H. In this organism, the P 'protein' is a heterodimer of two subunits. Requires pyridoxal 5'-phosphate as cofactor.

It carries out the reaction N(6)-[(R)-lipoyl]-L-lysyl-[glycine-cleavage complex H protein] + glycine + H(+) = N(6)-[(R)-S(8)-aminomethyldihydrolipoyl]-L-lysyl-[glycine-cleavage complex H protein] + CO2. In terms of biological role, the glycine cleavage system catalyzes the degradation of glycine. The P protein binds the alpha-amino group of glycine through its pyridoxal phosphate cofactor; CO(2) is released and the remaining methylamine moiety is then transferred to the lipoamide cofactor of the H protein. The sequence is that of Probable glycine dehydrogenase (decarboxylating) subunit 2 from Thermococcus kodakarensis (strain ATCC BAA-918 / JCM 12380 / KOD1) (Pyrococcus kodakaraensis (strain KOD1)).